The sequence spans 212 residues: Large ribosomal subunit protein uL3 (212 aa).

Q153 carries the post-translational modification N5-methylglutamine.

Belongs to the universal ribosomal protein uL3 family. In terms of assembly, part of the 50S ribosomal subunit. Forms a cluster with proteins L14 and L19. Methylated by PrmB.

Its function is as follows. One of the primary rRNA binding proteins, it binds directly near the 3'-end of the 23S rRNA, where it nucleates assembly of the 50S subunit. The sequence is that of Large ribosomal subunit protein uL3 from Colwellia psychrerythraea (strain 34H / ATCC BAA-681) (Vibrio psychroerythus).